The sequence spans 80 residues: U19-lycotoxin-Ls1b (80 aa).

The first 22 residues, 1–22, serve as a signal peptide directing secretion; it reads MSPKVQALIFIVGLITLLAAHA. A propeptide spanning residues 23–34 is cleaved from the precursor; that stretch reads QEELSDNIESER. Intrachain disulfides connect cysteine 36-cysteine 50, cysteine 43-cysteine 55, cysteine 49-cysteine 66, and cysteine 57-cysteine 64.

The protein belongs to the neurotoxin 02 (plectoxin) family. 05 (U19-lycotoxin) subfamily. In terms of tissue distribution, expressed by the venom gland.

The protein resides in the secreted. This chain is U19-lycotoxin-Ls1b, found in Lycosa singoriensis (Wolf spider).